A 388-amino-acid chain; its full sequence is 1-deoxy-D-xylulose 5-phosphate reductoisomerase (388 aa).

6 residues coordinate NADPH: Thr-10, Gly-11, Ser-12, Ile-13, Asn-37, and Asn-121. Position 122 (Lys-122) interacts with 1-deoxy-D-xylulose 5-phosphate. Glu-123 contacts NADPH. Residue Asp-147 participates in Mn(2+) binding. 1-deoxy-D-xylulose 5-phosphate is bound by residues Ser-148, Glu-149, Ser-173, and His-196. Mn(2+) is bound at residue Glu-149. Gly-202 serves as a coordination point for NADPH. 4 residues coordinate 1-deoxy-D-xylulose 5-phosphate: Ser-209, Asn-214, Lys-215, and Glu-218. Glu-218 serves as a coordination point for Mn(2+).

It belongs to the DXR family. Requires Mg(2+) as cofactor. Mn(2+) serves as cofactor.

It carries out the reaction 2-C-methyl-D-erythritol 4-phosphate + NADP(+) = 1-deoxy-D-xylulose 5-phosphate + NADPH + H(+). The protein operates within isoprenoid biosynthesis; isopentenyl diphosphate biosynthesis via DXP pathway; isopentenyl diphosphate from 1-deoxy-D-xylulose 5-phosphate: step 1/6. In terms of biological role, catalyzes the NADPH-dependent rearrangement and reduction of 1-deoxy-D-xylulose-5-phosphate (DXP) to 2-C-methyl-D-erythritol 4-phosphate (MEP). The chain is 1-deoxy-D-xylulose 5-phosphate reductoisomerase from Lachnoclostridium phytofermentans (strain ATCC 700394 / DSM 18823 / ISDg) (Clostridium phytofermentans).